Reading from the N-terminus, the 233-residue chain is Bcl-2-like protein 1 (233 aa).

Positions 4-24 match the BH4 motif; that stretch reads SNRELVVDFLSYKLSQKGYSW. Positions 27-73 are disordered; it reads FSDVEENRTEAPEETEAERETPSAINGNPSWHLADSPAVNGATGHSS. Phosphoserine; by PLK3 is present on serine 49. Serine 62 carries the phosphoserine; by CDK1 modification. The BH3 motif lies at 86-100; that stretch reads VKQALREAGDEFELR. Positions 129 to 148 match the BH1 motif; the sequence is ELFRDGVNWGRIVAFFSFGG. A BH2 motif is present at residues 180-195; that stretch reads PWIQENGGWDTFVDLY. Residues 210–226 form a helical membrane-spanning segment; that stretch reads FNRWFLTGMTVAGVVLL.

Belongs to the Bcl-2 family. In terms of assembly, homodimer. Interacts with BAD. Interacts with PGAM5. Interacts with HEBP2. Interacts with p53/TP53 and BBC3; interaction with BBC3 disrupts the interaction with p53/TP53. Interacts with ATP5F1A and ATP5F1B; the interactions mediate the association of isoform Bcl-X(L) with the mitochondrial membrane ATP synthase F(1)F(0) ATP synthase. Interacts with VDAC1. Interacts with BCL2L11 (via BH3). Interacts with RNF183. Interacts with GIMAP3/IAN4 and GIMAP5/IAN5. Interacts with GIMAP5 and HSPA8/HSC70; the interaction between HSPA8 and BCL2L1 is impaired in the absence of GIMAP5. Interacts with isoform 4 of CLU; this interaction releases and activates BAX and promotes cell death. Forms heterodimers with BAX, BAK or BCL2; heterodimerization with BAX does not seem to be required for anti-apoptotic activity. Interacts with isoform 1 of SIVA1; the interaction inhibits the anti-apoptotic activity. Interacts with IKZF3. Interacts with RTL10/BOP. Interacts with DNM1L and CLTA; DNM1L and BCL2L1 isoform BCL-X(L) may form a complex in synaptic vesicles that also contains clathrin and MFF. Interacts (via the loop between motifs BH4 and BH3) with NLRP1 (via LRR repeats), but not with NLRP2, NLRP3, NLRP4, PYCARD, nor MEFV. Interacts with BECN1. Proteolytically cleaved by caspases during apoptosis. The cleaved protein, lacking the BH4 motif, has pro-apoptotic activity. Post-translationally, phosphorylated on Ser-62 by CDK1. This phosphorylation is partial in normal mitotic cells, but complete in G2-arrested cells upon DNA-damage, thus promoting subsequent apoptosis probably by triggering caspases-mediated proteolysis. Phosphorylated by PLK3, leading to regulate the G2 checkpoint and progression to cytokinesis during mitosis. Phosphorylation at Ser-49 appears during the S phase and G2, disappears rapidly in early mitosis during prometaphase, metaphase and early anaphase, and re-appears during telophase and cytokinesis. In terms of processing, ubiquitinated by RNF183 during prolonged ER stress, leading to degradation by the proteosome. In terms of tissue distribution, widely expressed, with highest levels in the brain, thymus, bone marrow, and kidney. Bcl-X(L) and Bcl-X(delta-TM) expression is enhanced in B- and T-lymphocytes that have been activated.

It is found in the mitochondrion membrane. The protein resides in the nucleus membrane. The protein localises to the cytoplasm. It localises to the cytoskeleton. Its subcellular location is the microtubule organizing center. It is found in the centrosome. The protein resides in the mitochondrion inner membrane. The protein localises to the mitochondrion outer membrane. It localises to the mitochondrion matrix. Its subcellular location is the cytoplasmic vesicle. It is found in the secretory vesicle. The protein resides in the synaptic vesicle membrane. The protein localises to the cytosol. In terms of biological role, potent inhibitor of cell death. Inhibits activation of caspases. Appears to regulate cell death by blocking the voltage-dependent anion channel (VDAC) by binding to it and preventing the release of the caspase activator, CYC1, from the mitochondrial membrane. Also acts as a regulator of G2 checkpoint and progression to cytokinesis during mitosis. Isoform Bcl-X(L) also regulates presynaptic plasticity, including neurotransmitter release and recovery, number of axonal mitochondria as well as size and number of synaptic vesicle clusters. During synaptic stimulation, increases ATP availability from mitochondria through regulation of mitochondrial membrane ATP synthase F(1)F(0) activity and regulates endocytic vesicle retrieval in hippocampal neurons through association with DMN1L and stimulation of its GTPase activity in synaptic vesicles. May attenuate inflammation impairing NLRP1-inflammasome activation, hence CASP1 activation and IL1B release. Its function is as follows. Isoform Bcl-X(S) promotes apoptosis. The sequence is that of Bcl-2-like protein 1 (Bcl2l1) from Mus musculus (Mouse).